The primary structure comprises 99 residues: Large ribosomal subunit protein bL28 (99 aa).

The protein belongs to the bacterial ribosomal protein bL28 family.

The polypeptide is Large ribosomal subunit protein bL28 (Rhodospirillum rubrum (strain ATCC 11170 / ATH 1.1.1 / DSM 467 / LMG 4362 / NCIMB 8255 / S1)).